The sequence spans 225 residues: Endoglucanase (225 aa).

An N-terminal signal peptide occupies residues 1-15 (MKVFVVLAAIVAIAN). The active-site Nucleophile is Asp-29. 7 disulfides stabilise this stretch: Cys-30–Cys-152, Cys-31–Cys-66, Cys-35–Cys-103, Cys-50–Cys-74, Cys-104–Cys-219, Cys-106–Cys-209, and Cys-176–Cys-187. A glycan (N-linked (GlcNAc...) asparagine) is linked at Asn-55. Catalysis depends on Asp-138, which acts as the Proton donor.

It belongs to the glycosyl hydrolase 45 (cellulase K) family. N- and O-glycosylated. Contains hybrid- and complex-type N-glycans.

Its subcellular location is the secreted. The catalysed reaction is Endohydrolysis of (1-&gt;4)-beta-D-glucosidic linkages in cellulose, lichenin and cereal beta-D-glucans.. Activity is not affected by metal ions except Mn(2+), which reduces the activity by 40-50%. However, no significant change in activity in response to 1 mM EDTA. Hydrolyzes carboxymethylcellulose (CMC). Also hydrolyzes lichenan and barley beta-1,4-D-glucan. CMC is hydrolyzed majorily to cellobiose (G2), cellotriose (G3) and cellotetraose (G4). Cellohexaose (G6) is hydrolyzed to G4 and G2 with traces of G3. Cellopentaose (G5) is completely hydrolyzed to G2 and G3, and G4 is partially hydrolyzed to G2. Does not hydrolyze G2 or G3. Does not hydrolyze crystalline cellulose, soluble starch, xylan, mannan or laminarin. The protein is Endoglucanase of Cryptopygus antarcticus (Antarctic springtail).